The following is a 133-amino-acid chain: Small ribosomal subunit protein uS11 (133 aa).

Residues 1–23 (MPPKTRGAVRKPRKKDKKNIALG) form a disordered region. A compositionally biased stretch (basic residues) spans 7-17 (GAVRKPRKKDK).

It belongs to the universal ribosomal protein uS11 family. Part of the 30S ribosomal subunit. Interacts with proteins S7 and S18. Binds to IF-3.

Functionally, located on the platform of the 30S subunit, it bridges several disparate RNA helices of the 16S rRNA. Forms part of the Shine-Dalgarno cleft in the 70S ribosome. The chain is Small ribosomal subunit protein uS11 from Pseudarthrobacter chlorophenolicus (strain ATCC 700700 / DSM 12829 / CIP 107037 / JCM 12360 / KCTC 9906 / NCIMB 13794 / A6) (Arthrobacter chlorophenolicus).